The following is a 26-amino-acid chain: Unknown protein 16 (26 aa).

The interval 1 to 26 (AINSESGVRSVVPQPCNALPNQGPEK) is disordered.

The chain is Unknown protein 16 from Pseudotsuga menziesii (Douglas-fir).